Consider the following 320-residue polypeptide: Ferrochelatase (320 aa).

Fe cation is bound by residues H194 and E275.

Belongs to the ferrochelatase family. As to quaternary structure, monomer.

It localises to the cytoplasm. The catalysed reaction is heme b + 2 H(+) = protoporphyrin IX + Fe(2+). The protein operates within porphyrin-containing compound metabolism; protoheme biosynthesis; protoheme from protoporphyrin-IX: step 1/1. Catalyzes the ferrous insertion into protoporphyrin IX. The sequence is that of Ferrochelatase from Escherichia coli (strain K12 / MC4100 / BW2952).